The chain runs to 690 residues: Glycine--tRNA ligase beta subunit (690 aa).

This sequence belongs to the class-II aminoacyl-tRNA synthetase family. Tetramer of two alpha and two beta subunits.

Its subcellular location is the cytoplasm. The enzyme catalyses tRNA(Gly) + glycine + ATP = glycyl-tRNA(Gly) + AMP + diphosphate. The chain is Glycine--tRNA ligase beta subunit from Desulfatibacillum aliphaticivorans.